A 352-amino-acid chain; its full sequence is C-C chemokine receptor type 5 (352 aa).

Residues 1–30 (MDYQVSSPTYDIDYYTSEPCQKVNVKQIAA) lie on the Extracellular side of the membrane. Residue Y3 is modified to Sulfotyrosine. Residues S6 and S7 are each glycosylated (O-linked (GalNAc...) serine). Residues Y10, Y14, and Y15 each carry the sulfotyrosine modification. 2 disulfides stabilise this stretch: C20–C269 and C101–C178. Residues 31–58 (RLLPPLYSLVFIFGFVGNILVVLILINC) form a helical membrane-spanning segment. The Cytoplasmic portion of the chain corresponds to 59 to 68 (KRLKSMTDIY). The helical transmembrane segment at 69-89 (LLNLAISDLFFLLTVPFWAHY) threads the bilayer. Residues 90-102 (AAAQWDFGNTMCQ) are Extracellular-facing. The chain crosses the membrane as a helical span at residues 103–124 (LLTGLYFIGFFSGIFFIILLTI). Over 125–141 (DRYLAIVHAVFALKART) the chain is Cytoplasmic. Residues 142-166 (VTFGVVTSVITWVVAVFASLPGIIF) form a helical membrane-spanning segment. Over 167–198 (TRSQREGLHYTCSSHFPYSQYQFWKNFQTLKI) the chain is Extracellular. The chain crosses the membrane as a helical span at residues 199 to 218 (VILGLVLPLLVMVICYSGIL). The Cytoplasmic segment spans residues 219 to 235 (KTLLRCRSEKKRHRAVR). The helical transmembrane segment at 236–260 (LIFTIMIVYFLFWAPYNIVLLLNTF) threads the bilayer. Residues 261–277 (QEFFGLNNCSSSNRLDQ) are Extracellular-facing. The helical transmembrane segment at 278 to 301 (AMQVTETLGMTHCCINPIIYAFVG) threads the bilayer. Residues 302–352 (EKFRNYLLVFFQKHIAKHFCKCCSIFQQEAPERASSVYTRSTGEQEISVGL) lie on the Cytoplasmic side of the membrane. Residues C321, C323, and C324 are each lipidated (S-palmitoyl cysteine). A phosphoserine; by BARK1 mark is found at S336, S337, S342, and S349.

The protein belongs to the G-protein coupled receptor 1 family. As to quaternary structure, interacts with PRAF2. Efficient ligand binding to CCL3/MIP-1alpha and CCL4/MIP-1beta requires sulfation, O-glycosylation and sialic acid modifications. Glycosylation on Ser-6 is required for efficient binding of CCL4. Interacts with GRK2. Interacts with ARRB1 and ARRB2. Interacts with CNIH4. Interacts with S100A4; this interaction stimulates T-lymphocyte chemotaxis. Post-translationally, sulfated on at least 2 of the N-terminal tyrosines. Sulfation is required for efficient binding of the chemokines, CCL3 and CCL4. In terms of processing, palmitoylation in the C-terminal is important for cell surface expression. Phosphorylation on serine residues in the C-terminal is stimulated by binding CC chemokines especially by APO-RANTES. Post-translationally, O-glycosylated, but not N-glycosylated. Ser-6 appears to be the major site even if Ser-7 may be also O-glycosylated. Also sialylated glycans present which contribute to chemokine binding. Thr-16 and Ser-17 may also be glycosylated and, if so, with small moieties such as a T-antigen.

It is found in the cell membrane. In terms of biological role, receptor for a number of inflammatory CC-chemokines including CCL3/MIP-1-alpha, CCL4/MIP-1-beta and RANTES and subsequently transduces a signal by increasing the intracellular calcium ion level. May play a role in the control of granulocytic lineage proliferation or differentiation. Participates in T-lymphocyte migration to the infection site by acting as a chemotactic receptor. This chain is C-C chemokine receptor type 5 (CCR5), found in Trachypithecus johnii (Nilgiri langur).